The chain runs to 874 residues: Alanine--tRNA ligase (874 aa).

Residues H563, H567, C665, and H669 each coordinate Zn(2+).

Belongs to the class-II aminoacyl-tRNA synthetase family. Zn(2+) serves as cofactor.

The protein resides in the cytoplasm. It catalyses the reaction tRNA(Ala) + L-alanine + ATP = L-alanyl-tRNA(Ala) + AMP + diphosphate. Catalyzes the attachment of alanine to tRNA(Ala) in a two-step reaction: alanine is first activated by ATP to form Ala-AMP and then transferred to the acceptor end of tRNA(Ala). Also edits incorrectly charged Ser-tRNA(Ala) and Gly-tRNA(Ala) via its editing domain. The chain is Alanine--tRNA ligase from Histophilus somni (strain 2336) (Haemophilus somnus).